Here is a 336-residue protein sequence, read N- to C-terminus: O-methyltransferase 2 (336 aa).

Residues glycine 170, aspartate 198, asparagine 221, phenylalanine 222, and lysine 237 each contribute to the S-adenosyl-L-methionine site. Residue histidine 241 is the Proton acceptor of the active site.

This sequence belongs to the class I-like SAM-binding methyltransferase superfamily. Cation-independent O-methyltransferase family. COMT subfamily.

It catalyses the reaction (3,5-dichloro-2,4,6-trihydroxyphenyl)hexan-1-one + S-adenosyl-L-methionine = 1-(3,5-dichloro-2,6-dihydroxy-4-methoxyphenyl)hexan-1-one + S-adenosyl-L-homocysteine + H(+). This Dictyostelium discoideum (Social amoeba) protein is O-methyltransferase 2 (omt2).